The following is a 427-amino-acid chain: Alpha/beta hydrolase gkaG (427 aa).

Asp368 is an active-site residue.

It belongs to the AB hydrolase superfamily. In terms of assembly, homodimer.

It functions in the pathway mycotoxin biosynthesis. Its function is as follows. Alpha/beta hydrolase; part of the gene cluster that mediates the biosynthesis of GKK1032, fungal natural products containing a macrocyclic para-cyclophane connected to a decahydrofluorene ring system that show potent antitumor activities. Within the pathway, gkaG catalyzes the Knoevenagel condensation that affords the 3-pyrrolin-2-one ring, using as substrate the polyketide-tyrosyl acyl thioester product of gkaA. The pathway begins with the PKS-NRPS gkaA which, with the help of the trans-enoyl reductase gkaC, synthesizes the polyketide-tyrosyl acyl thioester product which can be reductively off-loaded by the terminal reductase (R) domain in gkaA. The alpha/beta hydrolase gkaG is then required to catalyze the subsequent Knoevenagel condensation that affords the 3-pyrrolin-2-one ring, whereas the three proteins gkaB, gkaX and gkaZ then function synergistically to form the cyclophane. This chain is Alpha/beta hydrolase gkaG, found in Penicillium citrinum.